We begin with the raw amino-acid sequence, 452 residues long: Low-affinity putrescine importer PlaP (452 aa).

Residues 1–16 lie on the Cytoplasmic side of the membrane; the sequence is MSHNVTPNTSRVELRK. A helical membrane pass occupies residues 17–37; that stretch reads TLTLVPVVMMGLAYMQPMTLF. Residues 38 to 48 lie on the Periplasmic side of the membrane; it reads DTFGIVSGLTD. A helical transmembrane segment spans residues 49–69; sequence GHVPTAYAFALIAILFTALSY. Residues 70-95 lie on the Cytoplasmic side of the membrane; that stretch reads GKLVRRYPSAGSAYTYAQKSISPTVG. The chain crosses the membrane as a helical span at residues 96 to 116; the sequence is FMVGWSSLLDYLFAPMINILL. Over 117–123 the chain is Periplasmic; sequence AKIYFEA. A helical transmembrane segment spans residues 124–144; sequence LVPSIPSWMFVVALVAFMTAF. Residues 145-158 are Cytoplasmic-facing; sequence NLRSLKSVANFNTV. The chain crosses the membrane as a helical span at residues 159 to 179; sequence IVVLQVVLIAVILGMVVYGVF. At 180–199 the chain is on the periplasmic side; it reads EGEGAGTLASTRPFWSGDAH. Residues 200–220 form a helical membrane-spanning segment; that stretch reads VIPMITGATILCFSFTGFDGI. At 221-237 the chain is on the cytoplasmic side; that stretch reads SNLSEETKDAERVIPRA. A helical transmembrane segment spans residues 238–258; sequence IFLTALIGGMIFIFATYFLQL. The Periplasmic segment spans residues 259 to 283; it reads YFPDISRFKDPDASQPEIMLYVAGK. Residues 284-304 form a helical membrane-spanning segment; it reads AFQVGALIFSTITVLASGMAA. At 305–339 the chain is on the cytoplasmic side; the sequence is HAGVARLMYVMGRDGVFPKSFFGYVHPKWRTPAMN. The next 2 membrane-spanning stretches (helical) occupy residues 340 to 360 and 361 to 381; these read IILVGAIALLAINFDLVMATA and LINFGALVAFTFVNLSVISQF. Topologically, residues 382–394 are cytoplasmic; sequence WIREKRNKTLKDH. A helical transmembrane segment spans residues 395–415; that stretch reads FQYLFLPMCGALTVGALWVNL. Residues 416 to 417 lie on the Periplasmic side of the membrane; that stretch reads EE. The helical transmembrane segment at 418–438 threads the bilayer; sequence SSMVLGLIWAAIGLIYLACVT. Residues 439-452 lie on the Cytoplasmic side of the membrane; that stretch reads KSFRNPVPQYEDVA.

The protein belongs to the amino acid-polyamine-organocation (APC) superfamily.

The protein localises to the cell inner membrane. It catalyses the reaction putrescine(in) + H(+)(in) = putrescine(out) + H(+)(out). Putrescine importer. The sequence is that of Low-affinity putrescine importer PlaP (plaP) from Escherichia coli O157:H7.